The primary structure comprises 210 residues: Redox-sensing transcriptional repressor Rex (210 aa).

The segment at residues 17-56 (KYHRYLNELMKNDVDRISSKELGEKIGFTASQIRQDLNCF) is a DNA-binding region (H-T-H motif). 91 to 96 (GAGNIG) serves as a coordination point for NAD(+).

This sequence belongs to the transcriptional regulatory Rex family. In terms of assembly, homodimer.

The protein resides in the cytoplasm. Its function is as follows. Modulates transcription in response to changes in cellular NADH/NAD(+) redox state. This Clostridium botulinum (strain Alaska E43 / Type E3) protein is Redox-sensing transcriptional repressor Rex.